Here is a 478-residue protein sequence, read N- to C-terminus: Odorant receptor coreceptor (478 aa).

At 1-43 (MNVQPTKYHGLVLDLMPNIRLMQGFGHFLFRYVNGPVLIRKLY) the chain is on the cytoplasmic side. A helical membrane pass occupies residues 44–64 (SWWNLIMILLQYFAIMGNLVM). Residues 65 to 73 (NTGDVNELT) lie on the Extracellular side of the membrane. A helical transmembrane segment spans residues 74-94 (ANTITTLFFTHSVTKFIYVAV). The Cytoplasmic portion of the chain corresponds to 95-133 (NSEHFYRTLGIWNQPNSHSLFAESDARYHSIALAKMRKL). A helical membrane pass occupies residues 134–154 (LVMVMVTTVLSVVAWITITFF). Residues 155–187 (GDSVKNVFDKETNETYTVEIPRLPIKAWYPWDA) are Extracellular-facing. The N-linked (GlcNAc...) asparagine glycan is linked to asparagine 167. The helical transmembrane segment at 188–208 (MSGVPYFFSFIYQAYFLLFSM) threads the bilayer. Residues 209-343 (CQANLADVMF…VERHKHVVRL (135 aa)) lie on the Cytoplasmic side of the membrane. A helical transmembrane segment spans residues 344 to 364 (VSAIGETYGAALLLHMLTSTI). Residues 365–382 (KLTLLAYQATKIDALNVY) are Extracellular-facing. Residues 383–403 (GLTVIGYLVYALAQVFLFCIF) form a helical membrane-spanning segment. Residues 404-454 (GNRLIEESSSVMEAAYSCHWYDGSEEAKTFVQIVCQQCQKAMTISGAKFFT) lie on the Cytoplasmic side of the membrane. Residues 455–475 (VSLDLFASVLGAVVTYFMVLV) traverse the membrane as a helical segment. Residues 476-478 (QLK) lie on the Extracellular side of the membrane.

It belongs to the insect chemoreceptor superfamily. Heteromeric odorant receptor channel (TC 1.A.69) family. Orco subfamily. As to quaternary structure, heterodimer with conventional odorant receptors (ORs). Complexes exist early in the endomembrane system in olfactory sensory neurons (OSNs), coupling these complexes to the conserved ciliary trafficking pathway. Found specifically within most antennal and maxillary palp sensilla, as well as in a subset of proboscis sensilla.

It localises to the cell membrane. Its function is as follows. Odorant coreceptor which complexes with conventional odorant receptors (ORs) to form odorant-sensing units, providing sensitive and prolonged odorant signaling and calcium permeability. Orco is a universal and integral part of the functional odorant receptor, involved in the dendritic localization of other olfactory receptors. Plays a key role in preferred attraction of females for humans over non-human hosts for blood feeding. Human attraction plays a crucial role in the transmission of dengue and yellow fever by the mosquito. Also required for the response to the insect repellent IR3535; or to N,N-Diethyl-meta-toluamide (DEET), the most widely used insect repellent worldwide. This Aedes aegypti (Yellowfever mosquito) protein is Odorant receptor coreceptor (SGPRor7).